The sequence spans 526 residues: Butyrophilin subfamily 1 member A1 (526 aa).

The signal sequence occupies residues 1–26; the sequence is MAVFPSSGLPRCLLTLILLQLPKLDS. Ig-like V-type domains follow at residues 27–138 and 148–234; these read APFD…ALVH and PHIS…VEIS. At 27–242 the chain is on the extracellular side; it reads APFDVIGPPE…ISIPASSLPR (216 aa). Cystine bridges form between Cys50-Cys124 and Cys164-Cys218. 2 N-linked (GlcNAc...) asparagine glycosylation sites follow: Asn55 and Asn215. A helical membrane pass occupies residues 243 to 269; that stretch reads LTPWIVAVAVILMVLGLLTIGSIFFTW. The Cytoplasmic portion of the chain corresponds to 270–526; the sequence is RLYNERPRER…IPTQPSQGAP (257 aa). The B30.2/SPRY domain maps to 285-479; that stretch reads SKERLLEELK…LTICPIADGP (195 aa). The segment at 495–526 is disordered; the sequence is IPLSPMGEDSAPRDADTLHSKLIPTQPSQGAP. Over residues 504 to 513 the composition is skewed to basic and acidic residues; it reads SAPRDADTLH. Over residues 517-526 the composition is skewed to polar residues; that stretch reads IPTQPSQGAP.

It belongs to the immunoglobulin superfamily. BTN/MOG family. In terms of assembly, seems to associate with xanthine dehydrogenase/oxidase. Post-translationally, N-glycosylated.

The protein localises to the membrane. It is found in the secreted. In terms of biological role, may function in the secretion of milk-fat droplets. May act as a specific membrane-associated receptor for the association of cytoplasmic droplets with the apical plasma membrane. Inhibits the proliferation of CD4 and CD8 T-cells activated by anti-CD3 antibodies, T-cell metabolism and IL2 and IFNG secretion. The chain is Butyrophilin subfamily 1 member A1 (BTN1A1) from Homo sapiens (Human).